We begin with the raw amino-acid sequence, 707 residues long: Ornithine decarboxylase (707 aa).

Residues 83-102 (NRNPLSRADSAAGREETAQT) form a disordered region. Lysine 288 is modified (N6-(pyridoxal phosphate)lysine). Pyridoxal 5'-phosphate contacts are provided by residues serine 421, glycine 458, and 498–501 (EPGR). 561-562 (FD) serves as a coordination point for substrate. Residue cysteine 634 is the Proton donor; shared with dimeric partner of the active site. Residue aspartate 635 participates in substrate binding. Residue tyrosine 663 participates in pyridoxal 5'-phosphate binding.

It belongs to the Orn/Lys/Arg decarboxylase class-II family. Homodimer. Only the dimer is catalytically active, as the active sites are constructed of residues from both monomers. Requires pyridoxal 5'-phosphate as cofactor.

The catalysed reaction is L-ornithine + H(+) = putrescine + CO2. It functions in the pathway amine and polyamine biosynthesis; putrescine biosynthesis via L-ornithine pathway; putrescine from L-ornithine: step 1/1. Its activity is regulated as follows. Inhibited by antizyme (AZ) in response to polyamine levels. AZ inhibits the assembly of the functional homodimer by binding to ODC monomers and targeting them for ubiquitin-independent proteolytic destruction by the 26S proteasome. Inhibited by 1-amino-oxy-3-aminopropane (APA, an isosteric analog of putrescine). Irreversibly inhibited by alpha-difluoromethylornithine (DFMO, a curative agent of West African sleeping sickness). Its function is as follows. Catalyzes the first and rate-limiting step of polyamine biosynthesis that converts ornithine into putrescine, which is the precursor for the polyamines, spermidine and spermine. Polyamines are essential for cell proliferation and are implicated in cellular processes, ranging from DNA replication to apoptosis. The protein is Ornithine decarboxylase of Leishmania donovani.